A 110-amino-acid chain; its full sequence is Putative UPF0377 protein YKL223W (110 aa).

Belongs to the UPF0377 family.

The sequence is that of Putative UPF0377 protein YKL223W from Saccharomyces cerevisiae (strain ATCC 204508 / S288c) (Baker's yeast).